A 259-amino-acid chain; its full sequence is Hemin import ATP-binding protein HmuV (259 aa).

One can recognise an ABC transporter domain in the interval 8–242 (ISANNISYRI…KMIENVYGHK (235 aa)). Residue 40–47 (GPNGAGKS) coordinates ATP.

It belongs to the ABC transporter superfamily. Heme (hemin) importer (TC 3.A.1.14.5) family. As to quaternary structure, the complex is composed of two ATP-binding proteins (HmuV), two transmembrane proteins (HmuU) and a solute-binding protein (HmuT).

It localises to the cell inner membrane. Functionally, part of the ABC transporter complex HmuTUV involved in hemin import. Responsible for energy coupling to the transport system. The polypeptide is Hemin import ATP-binding protein HmuV (Aliivibrio fischeri (strain ATCC 700601 / ES114) (Vibrio fischeri)).